An 894-amino-acid polypeptide reads, in one-letter code: Myb-like protein K (894 aa).

Low complexity predominate over residues 93–139; that stretch reads LQQQQQSPVTNVATNTPPTLQHSISSPSPNNFNNNNNANNQFLSPNS. Disordered regions lie at residues 93-221, 299-353, 492-539, and 601-659; these read LQQQ…SASS, QVGN…QPIT, QQQQ…LEMI, and AATT…HWTS. A compositionally biased stretch (polar residues) spans 140–149; sequence PQVAKSSPSQ. A compositionally biased stretch (low complexity) spans 150–221; that stretch reads NNPSTPIANT…SQSLNSSASS (72 aa). A compositionally biased stretch (polar residues) spans 300–309; that stretch reads VGNPMQQSND. Low complexity-rich tracts occupy residues 310–353 and 492–527; these read MQPQ…QPIT and QQQQ…PQQM. Basic and acidic residues-rich tracts occupy residues 611-640 and 649-659; these read GKEE…SKKD and ASKEKTSHWTS. Residues 649 to 704 enclose the HTH myb-type domain; the sequence is ASKEKTSHWTSEEHNKFLEAVQQFGIKDYHAIAKFVQTRNHHQVRTHVNTYLKNQK. Residues 677–700 constitute a DNA-binding region (H-T-H motif); that stretch reads YHAIAKFVQTRNHHQVRTHVNTYL. A disordered region spans residues 703–852; it reads QKKAEAATSS…EYNSGFDSNS (150 aa). Composition is skewed to low complexity over residues 710–742, 751–805, and 815–845; these read TSST…QPPI, QQQQ…QQPQ, and PPNN…NEYN.

The protein localises to the nucleus. The sequence is that of Myb-like protein K (mybK) from Dictyostelium discoideum (Social amoeba).